The sequence spans 930 residues: Isoleucine--tRNA ligase (930 aa).

The 'HIGH' region motif lies at 57 to 67; it reads PYANGNIHVGH. E554 provides a ligand contact to L-isoleucyl-5'-AMP. The short motif at 595–599 is the 'KMSKS' region element; the sequence is KMSKS. K598 provides a ligand contact to ATP. 4 residues coordinate Zn(2+): C888, C891, C908, and C911.

It belongs to the class-I aminoacyl-tRNA synthetase family. IleS type 1 subfamily. In terms of assembly, monomer. The cofactor is Zn(2+).

Its subcellular location is the cytoplasm. It catalyses the reaction tRNA(Ile) + L-isoleucine + ATP = L-isoleucyl-tRNA(Ile) + AMP + diphosphate. Catalyzes the attachment of isoleucine to tRNA(Ile). As IleRS can inadvertently accommodate and process structurally similar amino acids such as valine, to avoid such errors it has two additional distinct tRNA(Ile)-dependent editing activities. One activity is designated as 'pretransfer' editing and involves the hydrolysis of activated Val-AMP. The other activity is designated 'posttransfer' editing and involves deacylation of mischarged Val-tRNA(Ile). The chain is Isoleucine--tRNA ligase from Streptococcus pneumoniae (strain CGSP14).